The following is a 269-amino-acid chain: 5'-nucleotidase SurE (269 aa).

Residues Asp-8, Asp-9, Ser-40, and Asn-93 each coordinate a divalent metal cation.

It belongs to the SurE nucleotidase family. A divalent metal cation serves as cofactor.

The protein localises to the cytoplasm. The enzyme catalyses a ribonucleoside 5'-phosphate + H2O = a ribonucleoside + phosphate. Its function is as follows. Nucleotidase that shows phosphatase activity on nucleoside 5'-monophosphates. In Caulobacter sp. (strain K31), this protein is 5'-nucleotidase SurE.